Reading from the N-terminus, the 302-residue chain is Sulfate adenylyltransferase subunit 2 (302 aa).

Belongs to the PAPS reductase family. CysD subfamily. Heterodimer composed of CysD, the smaller subunit, and CysN.

The enzyme catalyses sulfate + ATP + H(+) = adenosine 5'-phosphosulfate + diphosphate. Its pathway is sulfur metabolism; hydrogen sulfide biosynthesis; sulfite from sulfate: step 1/3. Its function is as follows. With CysN forms the ATP sulfurylase (ATPS) that catalyzes the adenylation of sulfate producing adenosine 5'-phosphosulfate (APS) and diphosphate, the first enzymatic step in sulfur assimilation pathway. APS synthesis involves the formation of a high-energy phosphoric-sulfuric acid anhydride bond driven by GTP hydrolysis by CysN coupled to ATP hydrolysis by CysD. The sequence is that of Sulfate adenylyltransferase subunit 2 from Bacteroides thetaiotaomicron (strain ATCC 29148 / DSM 2079 / JCM 5827 / CCUG 10774 / NCTC 10582 / VPI-5482 / E50).